We begin with the raw amino-acid sequence, 213 residues long: 3,4-dihydroxy-2-butanone 4-phosphate synthase (213 aa).

D-ribulose 5-phosphate contacts are provided by residues 37–38 (RE), aspartate 42, 150–154 (RAGHT), and glutamate 174. Residue glutamate 38 participates in Mg(2+) binding. Residue histidine 153 coordinates Mg(2+).

The protein belongs to the DHBP synthase family. In terms of assembly, homodimer. Mg(2+) serves as cofactor. The cofactor is Mn(2+).

The enzyme catalyses D-ribulose 5-phosphate = (2S)-2-hydroxy-3-oxobutyl phosphate + formate + H(+). Its pathway is cofactor biosynthesis; riboflavin biosynthesis; 2-hydroxy-3-oxobutyl phosphate from D-ribulose 5-phosphate: step 1/1. Catalyzes the conversion of D-ribulose 5-phosphate to formate and 3,4-dihydroxy-2-butanone 4-phosphate. The chain is 3,4-dihydroxy-2-butanone 4-phosphate synthase from Wigglesworthia glossinidia brevipalpis.